A 213-amino-acid chain; its full sequence is 3-isopropylmalate dehydratase small subunit (213 aa).

The protein belongs to the LeuD family. LeuD type 1 subfamily. Heterodimer of LeuC and LeuD.

It carries out the reaction (2R,3S)-3-isopropylmalate = (2S)-2-isopropylmalate. It functions in the pathway amino-acid biosynthesis; L-leucine biosynthesis; L-leucine from 3-methyl-2-oxobutanoate: step 2/4. Catalyzes the isomerization between 2-isopropylmalate and 3-isopropylmalate, via the formation of 2-isopropylmaleate. The protein is 3-isopropylmalate dehydratase small subunit of Aromatoleum aromaticum (strain DSM 19018 / LMG 30748 / EbN1) (Azoarcus sp. (strain EbN1)).